Consider the following 366-residue polypeptide: Galactoside alpha-(1,2)-fucosyltransferase 1 (366 aa).

The Cytoplasmic portion of the chain corresponds to 1-8 (MWPLSHRH). The helical; Signal-anchor for type II membrane protein transmembrane segment at 9 to 25 (LCLAFLLVCVLSAISFF) threads the bilayer. Topologically, residues 26–366 (LHIHQDSFPH…LSPLWTLAEP (341 aa)) are lumenal. Asn66, Asn302, and Asn328 each carry an N-linked (GlcNAc...) asparagine glycan.

This sequence belongs to the glycosyltransferase 11 family.

It localises to the golgi apparatus. It is found in the golgi stack membrane. The enzyme catalyses a beta-D-galactosyl-(1-&gt;4)-N-acetyl-beta-D-glucosaminyl derivative + GDP-beta-L-fucose = an alpha-L-Fuc-(1-&gt;2)-beta-D-Gal-(1-&gt;4)-beta-D-GlcNAc derivative + GDP + H(+). The catalysed reaction is a ganglioside GA1 + GDP-beta-L-fucose = a ganglioside Fuc-GA1 + GDP + H(+). It catalyses the reaction a beta-D-Gal-(1-&gt;3)-beta-D-GlcNAc-(1-&gt;3)-beta-D-Gal-(1-&gt;4)-beta-D-Glc-(1&lt;-&gt;1')-Cer(d18:1(4E)) + GDP-beta-L-fucose = alpha-L-fucosyl-(1-&gt;2)- beta-D-galactosyl-(1-&gt;3)-N-acetyl-beta-D-glucosaminyl-(1-&gt;3)-beta-D-galactosyl-(1-&gt;4)-beta-D-glucosyl-(1&lt;-&gt;1')-N-acylsphing-4-enine + GDP + H(+). It carries out the reaction a neolactoside nLc4Cer(d18:1(4E)) + GDP-beta-L-fucose = a neolactoside IV(2)-alpha-Fuc-nLc4Cer(d18:1(4E)) + GDP + H(+). The enzyme catalyses a ganglioside GM1 + GDP-beta-L-fucose = a ganglioside Fuc-GM1 + GDP + H(+). The catalysed reaction is beta-D-galactosyl-(1-&gt;3)-N-acetyl-D-galactosamine + GDP-beta-L-fucose = alpha-L-fucosyl-(1-&gt;2)-beta-D-galactosyl-(1-&gt;3)-N-acetyl-D-galactosamine + GDP + H(+). It participates in protein modification; protein glycosylation. Functionally, catalyzes the transfer of L-fucose, from a guanosine diphosphate-beta-L-fucose, to the terminal galactose residue of glycoconjugates through an alpha(1,2) linkage leading to H antigen synthesis that is an intermediate substrate in the synthesis of ABO blood group antigens. H antigen is essential for maturation of the glomerular layer of the main olfactory bulb, in cell migration and early cell-cell contacts during tumor associated angiogenesis. Preferentially fucosylates soluble lactose and to a lesser extent fucosylates glycolipids gangliosides GA1 and GM1a. The sequence is that of Galactoside alpha-(1,2)-fucosyltransferase 1 from Lagothrix lagotricha (Brown woolly monkey).